The sequence spans 211 residues: LexA repressor (211 aa).

The H-T-H motif DNA-binding region spans 27–47; the sequence is QTEIARAFGFKGVRAAQYHLE. Residues serine 131 and lysine 168 each act as for autocatalytic cleavage activity in the active site.

It belongs to the peptidase S24 family. As to quaternary structure, homodimer.

It catalyses the reaction Hydrolysis of Ala-|-Gly bond in repressor LexA.. In terms of biological role, represses a number of genes involved in the response to DNA damage (SOS response), including recA and lexA. In the presence of single-stranded DNA, RecA interacts with LexA causing an autocatalytic cleavage which disrupts the DNA-binding part of LexA, leading to derepression of the SOS regulon and eventually DNA repair. The polypeptide is LexA repressor (Stenotrophomonas maltophilia (strain R551-3)).